We begin with the raw amino-acid sequence, 62 residues long: Large ribosomal subunit protein bL28 (62 aa).

This sequence belongs to the bacterial ribosomal protein bL28 family.

This is Large ribosomal subunit protein bL28 from Moorella thermoacetica (strain ATCC 39073 / JCM 9320).